Reading from the N-terminus, the 171-residue chain is S-ribosylhomocysteine lyase (171 aa).

3 residues coordinate Fe cation: H54, H58, and C128.

Belongs to the LuxS family. In terms of assembly, homodimer. Fe cation serves as cofactor.

The catalysed reaction is S-(5-deoxy-D-ribos-5-yl)-L-homocysteine = (S)-4,5-dihydroxypentane-2,3-dione + L-homocysteine. In terms of biological role, involved in the synthesis of autoinducer 2 (AI-2) which is secreted by bacteria and is used to communicate both the cell density and the metabolic potential of the environment. The regulation of gene expression in response to changes in cell density is called quorum sensing. Catalyzes the transformation of S-ribosylhomocysteine (RHC) to homocysteine (HC) and 4,5-dihydroxy-2,3-pentadione (DPD). This is S-ribosylhomocysteine lyase from Yersinia pseudotuberculosis serotype O:1b (strain IP 31758).